The primary structure comprises 331 residues: Type 2 lactosamine alpha-2,3-sialyltransferase (331 aa).

Residues 1–4 (MRGY) are Cytoplasmic-facing. The helical; Signal-anchor for type II membrane protein transmembrane segment at 5–25 (LVAIFLSAVFLYYVLHCILWG) threads the bilayer. At 26 to 331 (TNVYWVAPVE…KNLVINLTQD (306 aa)) the chain is on the lumenal side. N-linked (GlcNAc...) asparagine glycosylation is found at asparagine 129, asparagine 181, asparagine 282, asparagine 295, asparagine 308, and asparagine 327.

It belongs to the glycosyltransferase 29 family. Ubiquitous.

It localises to the golgi apparatus membrane. The enzyme catalyses a neolactoside nLc4Cer(d18:1(4E)) + CMP-N-acetyl-beta-neuraminate = a neolactoside IV(3)-alpha-NeuAc-nLc4Cer(d18:1(4E)) + CMP + H(+). It catalyses the reaction a beta-D-galactosyl-(1-&gt;4)-N-acetyl-beta-D-glucosaminyl derivative + CMP-N-acetyl-beta-neuraminate = an N-acetyl-alpha-neuraminyl-(2-&gt;3)-beta-D-galactosyl-(1-&gt;4)-N-acetyl-beta-D-glucosaminyl derivative + CMP + H(+). It carries out the reaction a neolactoside nLc6Cer(d18:1(4E)) + CMP-N-acetyl-beta-neuraminate = a neolactoside VI(3)-alpha-NeuNAc-nLc6Cer(d18:1(4E)) + CMP + H(+). Transfers the sialyl residue from CMP-N-acetyl-beta-neuraminate to the terminal galactose residue on sugar chains of glycoproteins and glycolipids. It's alpha-2,3-sialyltransferase activity is specific toward type II glycan chains (Galbeta1-4GlcNAc) on glycoproteins and glycolipids such as neolactosides nLc4Cer and nLc6Cer, whose sialyl-products serve as precursors for the Lewis X antigen. Critically involved in the synthesis of functional selectin ligands needed for neutrophil recruitment during inflammation and lymphocyte homing to the lymph nodes. In Homo sapiens (Human), this protein is Type 2 lactosamine alpha-2,3-sialyltransferase (ST3GAL6).